Reading from the N-terminus, the 129-residue chain is Small ribosomal subunit protein uS11 (129 aa).

It belongs to the universal ribosomal protein uS11 family. Part of the 30S ribosomal subunit. Interacts with proteins S7 and S18. Binds to IF-3.

Functionally, located on the platform of the 30S subunit, it bridges several disparate RNA helices of the 16S rRNA. Forms part of the Shine-Dalgarno cleft in the 70S ribosome. The chain is Small ribosomal subunit protein uS11 from Lacticaseibacillus casei (strain BL23) (Lactobacillus casei).